The chain runs to 126 residues: Cell cycle protein GpsB (126 aa).

Positions L35–A72 form a coiled coil.

The protein belongs to the GpsB family. Forms polymers through the coiled coil domains. Interacts with PBP1, MreC and EzrA.

The protein localises to the cytoplasm. Divisome component that associates with the complex late in its assembly, after the Z-ring is formed, and is dependent on DivIC and PBP2B for its recruitment to the divisome. Together with EzrA, is a key component of the system that regulates PBP1 localization during cell cycle progression. Its main role could be the removal of PBP1 from the cell pole after pole maturation is completed. Also contributes to the recruitment of PBP1 to the division complex. Not essential for septum formation. The polypeptide is Cell cycle protein GpsB (Latilactobacillus sakei subsp. sakei (strain 23K) (Lactobacillus sakei subsp. sakei)).